A 192-amino-acid polypeptide reads, in one-letter code: dTTP/UTP pyrophosphatase (192 aa).

Residue aspartate 72 is the Proton acceptor of the active site.

This sequence belongs to the Maf family. YhdE subfamily. Requires a divalent metal cation as cofactor.

Its subcellular location is the cytoplasm. The catalysed reaction is dTTP + H2O = dTMP + diphosphate + H(+). The enzyme catalyses UTP + H2O = UMP + diphosphate + H(+). Its function is as follows. Nucleoside triphosphate pyrophosphatase that hydrolyzes dTTP and UTP. May have a dual role in cell division arrest and in preventing the incorporation of modified nucleotides into cellular nucleic acids. The polypeptide is dTTP/UTP pyrophosphatase (Hydrogenovibrio crunogenus (strain DSM 25203 / XCL-2) (Thiomicrospira crunogena)).